A 298-amino-acid chain; its full sequence is Tyrosine recombinase XerD (298 aa).

Residues 3–88 enclose the Core-binding (CB) domain; sequence ALDHPLIDQF…GLRGFFRYLL (86 aa). The Tyr recombinase domain maps to 109 to 292; that stretch reads PLPKSLSEAD…AKARLQQLHA (184 aa). Catalysis depends on residues Arg149, Lys173, His244, Arg247, and His270. The active-site O-(3'-phospho-DNA)-tyrosine intermediate is the Tyr279.

It belongs to the 'phage' integrase family. XerD subfamily. Forms a cyclic heterotetrameric complex composed of two molecules of XerC and two molecules of XerD.

It is found in the cytoplasm. In terms of biological role, site-specific tyrosine recombinase, which acts by catalyzing the cutting and rejoining of the recombining DNA molecules. The XerC-XerD complex is essential to convert dimers of the bacterial chromosome into monomers to permit their segregation at cell division. It also contributes to the segregational stability of plasmids. This is Tyrosine recombinase XerD from Pseudomonas putida (strain ATCC 47054 / DSM 6125 / CFBP 8728 / NCIMB 11950 / KT2440).